We begin with the raw amino-acid sequence, 746 residues long: Histone-lysine N-methyltransferase EZH2 (746 aa).

An interaction with DNMT1, DNMT3A and DNMT3B region spans residues 1 to 340; sequence MGQTGKKSEK…AKEFAAALTA (340 aa). The residue at position 21 (serine 21) is a Phosphoserine; by PKB/AKT1. The tract at residues 39–68 is interaction with EED; it reads KTMFSSNRQKILERTETLNQEWKQRRIQPV. O-linked (GlcNAc) serine glycosylation occurs at serine 75. A Phosphoserine modification is found at serine 76. Residues 180 to 217 form a disordered region; it reads QYNDDDDDDDGDDPDEREEKQKDLEDNRDDKETCPPRK. The span at 182–195 shows a compositional bias: acidic residues; that stretch reads NDDDDDDDGDDPDE. A compositionally biased stretch (basic and acidic residues) spans 196–217; it reads REEKQKDLEDNRDDKETCPPRK. The interaction with CDYL stretch occupies residues 329-522; sequence EGAKEFAAAL…SSNHVYNYQP (194 aa). Threonine 339 bears the Phosphothreonine mark. The segment at 340 to 426 is disordered; the sequence is AERIKTPPKR…PIKMKPNIEP (87 aa). Threonine 345 is modified (phosphothreonine; by CDK1 and CDK2). Positions 345-357 are enriched in basic residues; it reads TPPKRPGGRRRGR. Serine 363 and serine 366 each carry phosphoserine. Threonine 367 bears the Phosphothreonine mark. A compositionally biased stretch (basic and acidic residues) spans 374–385; sequence ESKDTDSDREAG. Position 487 is a phosphothreonine (threonine 487). In terms of domain architecture, CXC spans 503–605; it reads CRKIQLKKDG…SKNVSCKNCS (103 aa). The SET domain occupies 612 to 727; sequence KHLLLAPSDV…TGEELFFDYR (116 aa). Residue lysine 634 forms a Glycyl lysine isopeptide (Lys-Gly) (interchain with G-Cter in SUMO2) linkage.

It belongs to the class V-like SAM-binding methyltransferase superfamily. Histone-lysine methyltransferase family. EZ subfamily. As to quaternary structure, component of the PRC2/EED-EZH2 complex, which includes EED, EZH2, SUZ12, RBBP4 and RBBP7 and possibly AEBP2. The minimum components required for methyltransferase activity of the PRC2/EED-EZH2 complex are EED, EZH2 and SUZ12. The PRC2 complex may also interact with DNMT1, DNMT3A, DNMT3B and PHF1 via the EZH2 subunit and with SIRT1 via the SUZ12 subunit. Interacts with HDAC1 and HDAC2. Binds ATRX via the SET domain. Interacts with PRAME. Interacts with CDYL. Interacts with EED. Interacts with BMAL1. Interacts with CLOCK and CRY1. Interacts with DNMT3L; the interaction is direct. Interacts with EZHIP; the interaction blocks EZH2 methyltransferase activity. Interacts with ZNF263; recruited to the SIX3 promoter along with other proteins involved in chromatin modification and transcriptional corepression where it contributes to transcriptional repression. Interacts with ARMC12. Interacts with ZMYND8; the interaction is dependent on the presence of chromatin. Interacts with DDX18; this interaction inhibits the PRC2 complex. In terms of processing, phosphorylated by AKT1. Phosphorylation by AKT1 reduces methyltransferase activity. Phosphorylation at Thr-345 by CDK1 and CDK2 promotes maintenance of H3K27me3 levels at EZH2-target loci, thus leading to epigenetic gene silencing. Sumoylated. Post-translationally, glycosylated: O-GlcNAcylation at Ser-75 by OGT increases stability of EZH2 and facilitates the formation of H3K27me3 by the PRC2/EED-EZH2 complex. Present in actively dividing cells. Widely expressed in early embryos. In later embryogenesis, expression restricted to central and peripheral nervous system, liver and thymus. In adult, highest expression in spleen, testis and placenta. Lower levels in intestine, muscle and ovary and very low levels in brain and liver. No expression in heart, thyroid gland, lung and kidney.

Its subcellular location is the nucleus. The protein localises to the chromosome. The enzyme catalyses L-lysyl(27)-[histone H3] + 3 S-adenosyl-L-methionine = N(6),N(6),N(6)-trimethyl-L-lysyl(27)-[histone H3] + 3 S-adenosyl-L-homocysteine + 3 H(+). Its function is as follows. Polycomb group (PcG) protein. Catalytic subunit of the PRC2/EED-EZH2 complex, which methylates (H3K9me) and 'Lys-27' (H3K27me) of histone H3, leading to transcriptional repression of the affected target gene. Able to mono-, di- and trimethylate 'Lys-27' of histone H3 to form H3K27me1, H3K27me2 and H3K27me3, respectively. Displays a preference for substrates with less methylation, loses activity when progressively more methyl groups are incorporated into H3K27, H3K27me0 &gt; H3K27me1 &gt; H3K27me2. Compared to EZH1-containing complexes, it is more abundant in embryonic stem cells and plays a major role in forming H3K27me3, which is required for embryonic stem cell identity and proper differentiation. The PRC2/EED-EZH2 complex may also serve as a recruiting platform for DNA methyltransferases, thereby linking two epigenetic repression systems. Genes repressed by the PRC2/EED-EZH2 complex include HOXA7, HOXB6 and HOXC8. EZH2 can also methylate non-histone proteins such as the transcription factor GATA4 and the nuclear receptor RORA. Regulates the circadian clock via histone methylation at the promoter of the circadian genes. Essential for the CRY1/2-mediated repression of the transcriptional activation of PER1/2 by the CLOCK-BMAL1 heterodimer; involved in the di and trimethylation of 'Lys-27' of histone H3 on PER1/2 promoters which is necessary for the CRY1/2 proteins to inhibit transcription. This chain is Histone-lysine N-methyltransferase EZH2, found in Mus musculus (Mouse).